A 153-amino-acid chain; its full sequence is Cofilin (153 aa).

Residues 4–148 (SGATVSQDCI…EYDSILKTVS (145 aa)) form the ADF-H domain.

It belongs to the actin-binding proteins ADF family.

The protein localises to the cytoplasm. It localises to the cytoskeleton. It is found in the nucleus matrix. Controls reversibly actin polymerization and depolymerization in a pH-sensitive manner. It has the ability to bind G- and F-actin in a 1:1 ratio of cofilin to actin. Binding to F-actin is regulated by tropomyosin. It is the major component of intranuclear and cytoplasmic actin rods. Required for accumulation of actin at the cell division site via depolymerizing actin at the cell ends. In association with myosin II has a role in the assembly of the contractile ring via severing actin filaments. Involved in the maintenance of the contractile ring once formed. In association with profilin and capping protein, has a role in the mitotic reorganization of the actin cytoskeleton. The protein is Cofilin (COF1) of Gibberella zeae (strain ATCC MYA-4620 / CBS 123657 / FGSC 9075 / NRRL 31084 / PH-1) (Wheat head blight fungus).